The primary structure comprises 71 residues: UPF0346 protein SSU05_1322 (71 aa).

It belongs to the UPF0346 family.

In Streptococcus suis (strain 05ZYH33), this protein is UPF0346 protein SSU05_1322.